A 216-amino-acid polypeptide reads, in one-letter code: Neural cell adhesion molecule L1.2 (216 aa).

The Fibronectin type-III domain occupies 1-64 (EFFIHYLRKD…QTAGARVMEV (64 aa)). Residues 1–73 (EFFIHYLRKD…VKSGFVTESW (73 aa)) are Extracellular-facing. N-linked (GlcNAc...) asparagine glycans are attached at residues Asn-22 and Asn-46. A helical membrane pass occupies residues 74 to 94 (FIGLISALVLLLLVLLILCFI). The Cytoplasmic portion of the chain corresponds to 95–216 (KRSKGGKYSV…GLPNSAALLD (122 aa)). 2 disordered regions span residues 127-149 (YRSLESDNEEKRTASQPSLCEDS) and 173-216 (DESL…ALLD). Over residues 128–139 (RSLESDNEEKRT) the composition is skewed to basic and acidic residues.

This sequence belongs to the immunoglobulin superfamily. L1/neurofascin/NgCAM family. Expressed in many postmitotic neurons in 16-36 hours embryos. Little or no expression in the olfactory placode, the anterior lateral line/acoustic ganglia complex, the posterior lateral line ganglion, late-developing hindbrain neurons and some Rohon-Beard cells in the spinal cord.

It is found in the cell membrane. The protein localises to the cell projection. Its subcellular location is the growth cone. Cell adhesion molecule with an important role in the development of the nervous system. Involved in neuron-neuron adhesion, neurite fasciculation, outgrowth of neurites, etc. Binds to axonin on neurons. This Danio rerio (Zebrafish) protein is Neural cell adhesion molecule L1.2 (nadl1.2).